The chain runs to 21 residues: Cytoplasmic filament protein A (21 aa).

The disordered stretch occupies residues 1–21 (AILELPQSPNVFHPEKPSAVG).

It localises to the cytoplasm. Its function is as follows. Component of the cytoplasmic filaments that run the length of the organism just underneath the cytoplasmic membrane. The chain is Cytoplasmic filament protein A (cfpA) from Treponema phagedenis.